A 414-amino-acid polypeptide reads, in one-letter code: 2,3-diketo-5-methylthiopentyl-1-phosphate enolase (414 aa).

Lys99 serves as the catalytic Proton acceptor. Substrate contacts are provided by residues Lys148, 174–177 (KDDE), His265, Gly338, and 360–361 (GG). 3 residues coordinate Mg(2+): Lys174, Asp176, and Glu177. Lys174 carries the N6-carboxylysine modification.

Belongs to the RuBisCO large chain family. Type IV subfamily. Homodimer. Mg(2+) is required as a cofactor.

It carries out the reaction 5-methylsulfanyl-2,3-dioxopentyl phosphate = 2-hydroxy-5-methylsulfanyl-3-oxopent-1-enyl phosphate. The protein operates within amino-acid biosynthesis; L-methionine biosynthesis via salvage pathway; L-methionine from S-methyl-5-thio-alpha-D-ribose 1-phosphate: step 3/6. Its function is as follows. Catalyzes the enolization of 2,3-diketo-5-methylthiopentyl-1-phosphate (DK-MTP-1-P) into 2-hydroxy-3-keto-5-methylthiopentenyl-1-phosphate (HK-MTPenyl-1-P). In Bacillus cereus (strain ATCC 14579 / DSM 31 / CCUG 7414 / JCM 2152 / NBRC 15305 / NCIMB 9373 / NCTC 2599 / NRRL B-3711), this protein is 2,3-diketo-5-methylthiopentyl-1-phosphate enolase.